The chain runs to 28 residues: U15-ctenitoxin-Co1a (28 aa).

2 cysteine pairs are disulfide-bonded: cysteine 3–cysteine 17 and cysteine 10–cysteine 22.

As to expression, expressed by the venom gland.

The protein resides in the secreted. Its function is as follows. Insecticidal neurotoxin that reversibly inhibits the N-methyl-D-aspartate (NMDA)-subtype of ionotropic glutamate receptor (GRIN) and inhibits inactivation of insect sodium channels (Nav). In vivo, is highly toxic to insects. This Ctenus ornatus (Brazilian spider) protein is U15-ctenitoxin-Co1a.